The primary structure comprises 138 residues: Small ribosomal subunit protein uS9 (138 aa).

Belongs to the universal ribosomal protein uS9 family.

The sequence is that of Small ribosomal subunit protein uS9 (rps9) from Sulfolobus acidocaldarius (strain ATCC 33909 / DSM 639 / JCM 8929 / NBRC 15157 / NCIMB 11770).